The primary structure comprises 254 residues: Anamorsin homolog (254 aa).

The tract at residues 4 to 133 (VQENNHVLYL…EVGSKSKLSF (130 aa)) is N-terminal SAM-like domain. Positions 134–165 (AKKSNVAAVWKLDDNEEEERIDDEELLDEDDK) are linker. [2Fe-2S] cluster is bound by residues Cys176, Cys185, Cys188, and Cys190. The tract at residues 176 to 190 (CGTTGKRKACKDCSC) is fe-S binding site A. [4Fe-4S] cluster is bound by residues Cys215, Cys218, Cys226, and Cys229. Short sequence motifs (cx2C motif) lie at residues 215–218 (CGSC) and 226–229 (CATC). The fe-S binding site B stretch occupies residues 215 to 229 (CGSCYLGDAFRCATC).

The protein belongs to the anamorsin family. As to quaternary structure, monomer. It depends on [2Fe-2S] cluster as a cofactor. [4Fe-4S] cluster serves as cofactor.

It is found in the cytoplasm. It localises to the mitochondrion intermembrane space. Functionally, component of the cytosolic iron-sulfur (Fe-S) protein assembly (CIA) machinery. Required for the maturation of extramitochondrial Fe-S proteins. Part of an electron transfer chain functioning in an early step of cytosolic Fe-S biogenesis, facilitating the de novo assembly of a [4Fe-4S] cluster on the cytosolic Fe-S scaffold complex. Electrons are transferred from NADPH via a FAD- and FMN-containing diflavin oxidoreductase. Together with the diflavin oxidoreductase, also required for the assembly of the diferric tyrosyl radical cofactor of ribonucleotide reductase (RNR), probably by providing electrons for reduction during radical cofactor maturation in the catalytic small subunit. In Anopheles gambiae (African malaria mosquito), this protein is Anamorsin homolog.